The sequence spans 337 residues: Tetraacyldisaccharide 4'-kinase (337 aa).

55 to 62 serves as a coordination point for ATP; it reads NAGGTGKT.

It belongs to the LpxK family.

The catalysed reaction is a lipid A disaccharide + ATP = a lipid IVA + ADP + H(+). Its pathway is glycolipid biosynthesis; lipid IV(A) biosynthesis; lipid IV(A) from (3R)-3-hydroxytetradecanoyl-[acyl-carrier-protein] and UDP-N-acetyl-alpha-D-glucosamine: step 6/6. Transfers the gamma-phosphate of ATP to the 4'-position of a tetraacyldisaccharide 1-phosphate intermediate (termed DS-1-P) to form tetraacyldisaccharide 1,4'-bis-phosphate (lipid IVA). This Dinoroseobacter shibae (strain DSM 16493 / NCIMB 14021 / DFL 12) protein is Tetraacyldisaccharide 4'-kinase.